Consider the following 285-residue polypeptide: MPLVSMTEMLNTAKEKGYAVGQFNLNNLEFTQAILQAAEEEKSPVILGVSEGAGRYMGGFKTVVAMVKALMEEYKVTVPVAIHLDHGSSFESCAKAIHAGFTSVMIDASHHPFEENVATTAKVVELAHFHGVSVEAELGTVGGQEDDVIAEGVIYADPKECQELVERTGIDCLAPALGSVHGPYKGEPNLGFKEMEEIGKSTGLPLVLHGGTGIPTADIKKSISLGTAKINVNTENQISSAKAVRETLAAKPDEYDPRKYLGPAREAIKETVIGKMREFGSSNQA.

Serine 50 serves as a coordination point for D-glyceraldehyde 3-phosphate. The active-site Proton donor is the aspartate 85. Residues histidine 86, aspartate 107, glutamate 137, and histidine 181 each contribute to the Zn(2+) site. Position 182 (glycine 182) interacts with dihydroxyacetone phosphate. Histidine 209 contacts Zn(2+). Dihydroxyacetone phosphate contacts are provided by residues 210 to 212 and 231 to 234; these read GGT and NVNT. Phosphothreonine is present on residues threonine 212 and threonine 234.

Belongs to the class II fructose-bisphosphate aldolase family. The cofactor is Zn(2+). In terms of processing, phosphorylated during sporulation.

The catalysed reaction is beta-D-fructose 1,6-bisphosphate = D-glyceraldehyde 3-phosphate + dihydroxyacetone phosphate. Its pathway is carbohydrate degradation; glycolysis; D-glyceraldehyde 3-phosphate and glycerone phosphate from D-glucose: step 4/4. Functionally, catalyzes the aldol condensation of dihydroxyacetone phosphate (DHAP or glycerone-phosphate) with glyceraldehyde 3-phosphate (G3P) to form fructose 1,6-bisphosphate (FBP) in gluconeogenesis and the reverse reaction in glycolysis. The chain is Probable fructose-bisphosphate aldolase (fbaA) from Bacillus subtilis (strain 168).